The following is a 376-amino-acid chain: DNA replication and repair protein RecF (376 aa).

30 to 37 (GNNAQGKS) is an ATP binding site.

This sequence belongs to the RecF family.

It localises to the cytoplasm. In terms of biological role, the RecF protein is involved in DNA metabolism; it is required for DNA replication and normal SOS inducibility. RecF binds preferentially to single-stranded, linear DNA. It also seems to bind ATP. This is DNA replication and repair protein RecF from Nostoc sp. (strain PCC 7120 / SAG 25.82 / UTEX 2576).